The following is a 124-amino-acid chain: Small ribosomal subunit protein uS12 (124 aa).

Asp-89 is modified (3-methylthioaspartic acid).

Belongs to the universal ribosomal protein uS12 family. In terms of assembly, part of the 30S ribosomal subunit. Contacts proteins S8 and S17. May interact with IF1 in the 30S initiation complex.

Its function is as follows. With S4 and S5 plays an important role in translational accuracy. Functionally, interacts with and stabilizes bases of the 16S rRNA that are involved in tRNA selection in the A site and with the mRNA backbone. Located at the interface of the 30S and 50S subunits, it traverses the body of the 30S subunit contacting proteins on the other side and probably holding the rRNA structure together. The combined cluster of proteins S8, S12 and S17 appears to hold together the shoulder and platform of the 30S subunit. The sequence is that of Small ribosomal subunit protein uS12 from Nitratiruptor sp. (strain SB155-2).